The chain runs to 275 residues: 2,3,4,5-tetrahydropyridine-2,6-dicarboxylate N-succinyltransferase (275 aa).

Arg-106 and Asp-143 together coordinate substrate.

Belongs to the transferase hexapeptide repeat family. As to quaternary structure, homotrimer.

The protein resides in the cytoplasm. It catalyses the reaction (S)-2,3,4,5-tetrahydrodipicolinate + succinyl-CoA + H2O = (S)-2-succinylamino-6-oxoheptanedioate + CoA. It functions in the pathway amino-acid biosynthesis; L-lysine biosynthesis via DAP pathway; LL-2,6-diaminopimelate from (S)-tetrahydrodipicolinate (succinylase route): step 1/3. The sequence is that of 2,3,4,5-tetrahydropyridine-2,6-dicarboxylate N-succinyltransferase from Burkholderia mallei (strain NCTC 10247).